We begin with the raw amino-acid sequence, 76 residues long: Defensin-like protein 125 (76 aa).

The first 25 residues, 1 to 25 (MTKAITLAIFMVVLVLGMVTKETQG), serve as a signal peptide directing secretion. 4 disulfide bridges follow: Cys30/Cys74, Cys41/Cys60, Cys46/Cys68, and Cys50/Cys70.

Belongs to the DEFL family.

The protein resides in the secreted. This is Defensin-like protein 125 (LCR54) from Arabidopsis thaliana (Mouse-ear cress).